The primary structure comprises 280 residues: 3-hydroxyanthranilate 3,4-dioxygenase (280 aa).

A domain A (catalytic) region spans residues 1–160 (MAIPVNVKKW…SEQYKSGKPD (160 aa)). R43 contributes to the O2 binding site. Residues H47, E53, and H91 each coordinate Fe cation. E53 is a binding site for substrate. Substrate-binding residues include R95 and E105. A linker region spans residues 161-177 (PAQPIGKMPFFLNTEQV). The segment at 178-280 (MEPFSFQNWL…IALSTSQVPA (103 aa)) is domain B.

This sequence belongs to the 3-HAO family. Monomer. Fe(2+) is required as a cofactor.

The protein resides in the cytoplasm. The protein localises to the cytosol. It carries out the reaction 3-hydroxyanthranilate + O2 = (2Z,4Z)-2-amino-3-carboxymuconate 6-semialdehyde. Its pathway is cofactor biosynthesis; NAD(+) biosynthesis; quinolinate from L-kynurenine: step 3/3. Functionally, catalyzes the oxidative ring opening of 3-hydroxyanthranilate to 2-amino-3-carboxymuconate semialdehyde, which spontaneously cyclizes to quinolinate. The sequence is that of 3-hydroxyanthranilate 3,4-dioxygenase (haao) from Xenopus tropicalis (Western clawed frog).